Consider the following 261-residue polypeptide: Taurine import ATP-binding protein TauB (261 aa).

Residues 4 to 233 (LQLERIGAQY…RYAAGESARA (230 aa)) enclose the ABC transporter domain. 38-45 (GPSGSGKT) lines the ATP pocket.

This sequence belongs to the ABC transporter superfamily. Taurine importer (TC 3.A.1.17.1) family. In terms of assembly, the complex is composed of two ATP-binding proteins (TauB), two transmembrane proteins (TauC) and a solute-binding protein (TauA).

It localises to the cell inner membrane. The enzyme catalyses taurine(out) + ATP + H2O = taurine(in) + ADP + phosphate + H(+). In terms of biological role, part of the ABC transporter complex TauABC involved in taurine import. Responsible for energy coupling to the transport system. The protein is Taurine import ATP-binding protein TauB of Pseudomonas savastanoi pv. phaseolicola (strain 1448A / Race 6) (Pseudomonas syringae pv. phaseolicola (strain 1448A / Race 6)).